Reading from the N-terminus, the 194-residue chain is Imidazoleglycerol-phosphate dehydratase (194 aa).

Belongs to the imidazoleglycerol-phosphate dehydratase family.

The protein localises to the cytoplasm. The catalysed reaction is D-erythro-1-(imidazol-4-yl)glycerol 3-phosphate = 3-(imidazol-4-yl)-2-oxopropyl phosphate + H2O. Its pathway is amino-acid biosynthesis; L-histidine biosynthesis; L-histidine from 5-phospho-alpha-D-ribose 1-diphosphate: step 6/9. The sequence is that of Imidazoleglycerol-phosphate dehydratase from Bacillus cereus (strain AH187).